The chain runs to 429 residues: Adenylosuccinate synthetase (429 aa).

GTP contacts are provided by residues 13 to 19 (GDEGKGK) and 41 to 43 (GHT). Aspartate 14 serves as the catalytic Proton acceptor. Mg(2+) contacts are provided by aspartate 14 and glycine 41. Residues 14 to 17 (DEGK), 39 to 42 (NAGH), threonine 130, arginine 144, glutamine 224, threonine 239, and arginine 303 each bind IMP. Histidine 42 serves as the catalytic Proton donor. Position 299–305 (299–305 (ATTGRAR)) interacts with substrate. GTP-binding positions include arginine 305, 331-333 (KLD), and 412-414 (STG).

This sequence belongs to the adenylosuccinate synthetase family. Homodimer. It depends on Mg(2+) as a cofactor.

Its subcellular location is the cytoplasm. The catalysed reaction is IMP + L-aspartate + GTP = N(6)-(1,2-dicarboxyethyl)-AMP + GDP + phosphate + 2 H(+). The protein operates within purine metabolism; AMP biosynthesis via de novo pathway; AMP from IMP: step 1/2. Functionally, plays an important role in the de novo pathway of purine nucleotide biosynthesis. Catalyzes the first committed step in the biosynthesis of AMP from IMP. This Psychrobacter cryohalolentis (strain ATCC BAA-1226 / DSM 17306 / VKM B-2378 / K5) protein is Adenylosuccinate synthetase.